Here is a 337-residue protein sequence, read N- to C-terminus: Undecaprenyl-phosphate 4-deoxy-4-formamido-L-arabinose transferase (337 aa).

A run of 2 helical transmembrane segments spans residues 235–255 and 270–290; these read LSII…LLIV and FVLF…MGLL.

It belongs to the glycosyltransferase 2 family.

It is found in the cell inner membrane. It carries out the reaction UDP-4-deoxy-4-formamido-beta-L-arabinose + di-trans,octa-cis-undecaprenyl phosphate = 4-deoxy-4-formamido-alpha-L-arabinopyranosyl di-trans,octa-cis-undecaprenyl phosphate + UDP. The protein operates within glycolipid biosynthesis; 4-amino-4-deoxy-alpha-L-arabinose undecaprenyl phosphate biosynthesis; 4-amino-4-deoxy-alpha-L-arabinose undecaprenyl phosphate from UDP-4-deoxy-4-formamido-beta-L-arabinose and undecaprenyl phosphate: step 1/2. It functions in the pathway bacterial outer membrane biogenesis; lipopolysaccharide biosynthesis. Catalyzes the transfer of 4-deoxy-4-formamido-L-arabinose from UDP to undecaprenyl phosphate. The modified arabinose is attached to lipid A and is required for resistance to polymyxin and cationic antimicrobial peptides. This Pseudomonas syringae pv. syringae (strain B728a) protein is Undecaprenyl-phosphate 4-deoxy-4-formamido-L-arabinose transferase.